Here is a 264-residue protein sequence, read N- to C-terminus: MSPTAGENILLKAEALSVYYGNSLAVKDVYLEVLKNKIVAFIGPSGCGKSTILRCFNRMNDLINGCRVQGRITFHDQEINDGRVDAVELRSRIGMVFQKPNPFPKSIYENIAYGARINGYQGDMDELVEKSLRQAALWDEVKDKLKDSGLALSGGQQQRLCIARTVAVQPEVILMDEPCSALDPISTLAIEELMQTLKEQYTIIIVTHNMQQASRTSDYTAFFNARATEGGGKMGYLVEFDTTEKIFDSPDQEATADYVSGRFG.

An ABC transporter domain is found at 11–250 (LKAEALSVYY…DTTEKIFDSP (240 aa)). Position 43–50 (43–50 (GPSGCGKS)) interacts with ATP.

This sequence belongs to the ABC transporter superfamily. Phosphate importer (TC 3.A.1.7) family. The complex is composed of two ATP-binding proteins (PstB), two transmembrane proteins (PstC and PstA) and a solute-binding protein (PstS).

It localises to the cell inner membrane. The catalysed reaction is phosphate(out) + ATP + H2O = ADP + 2 phosphate(in) + H(+). In terms of biological role, part of the ABC transporter complex PstSACB involved in phosphate import. Responsible for energy coupling to the transport system. This is Phosphate import ATP-binding protein PstB from Synechococcus sp. (strain ATCC 27144 / PCC 6301 / SAUG 1402/1) (Anacystis nidulans).